Reading from the N-terminus, the 318-residue chain is Ankyrin repeat domain-containing protein 1 (318 aa).

Residues 37–77 are a coiled coil; it reads ALEKQEDLKTTSKSLIELEEEKQIKEKQLKSELLKKKLEER. ANK repeat units lie at residues 118–147, 151–180, 184–213, 217–246, 250–279, and 283–314; these read VDQT…DPNT, YKRT…NIEF, LEST…AINA, LLST…DLHA, EGDT…DLNI, and AGKT…KNSH.

The protein localises to the nucleus. Functionally, may act as a nuclear transcription factor that negatively regulates the expression of cardiac genes. This chain is Ankyrin repeat domain-containing protein 1 (ankrd1), found in Xenopus tropicalis (Western clawed frog).